Here is a 302-residue protein sequence, read N- to C-terminus: Ornithine carbamoyltransferase (302 aa).

Residues 47-50 (STRT), Gln74, Arg98, and 125-128 (HPCQ) each bind carbamoyl phosphate. L-ornithine contacts are provided by residues Asn156, Asp220, and 224–225 (SM). Residues 260–261 (CL) and Arg288 each bind carbamoyl phosphate.

The protein belongs to the aspartate/ornithine carbamoyltransferase superfamily. OTCase family.

It is found in the cytoplasm. The enzyme catalyses carbamoyl phosphate + L-ornithine = L-citrulline + phosphate + H(+). It participates in amino-acid biosynthesis; L-arginine biosynthesis; L-arginine from L-ornithine and carbamoyl phosphate: step 1/3. Reversibly catalyzes the transfer of the carbamoyl group from carbamoyl phosphate (CP) to the N(epsilon) atom of ornithine (ORN) to produce L-citrulline. In Methanosphaera stadtmanae (strain ATCC 43021 / DSM 3091 / JCM 11832 / MCB-3), this protein is Ornithine carbamoyltransferase.